A 367-amino-acid chain; its full sequence is MRLYFVLIFSVIFTTGNGKIQCKNMRGKSVDWFVVYKLPKLSGAGTSGKEFVYFDAESSDWTRGNDINDPNVAVGATVSQVYSADKSNNFWFMYSDDDPIKSADSYRGHAKGVSLFDSTTGFWLIHSVPNFPPIKSFSYPNTAEKYGQSFFCASMEVQHLTELAEHWKYIQATPYIINIPEKYATRFPTLKNVEAKQSLPRSATQFWISKPIKTVQGVTLMAYAKHKKFDGDIWNDLISRQNKVTLAVESWLNGSGDDIHTTCTSTSQTHDVTEMRVTGLNFASSKDHSKWAVSNSQTNPIVCFGDMNRQKSQLKRGGGALCIQNRNLWQLYHSFVIQVEPCKSSSHFSMFQTIATLLSAAGLVSKI.

The signal sequence occupies residues 1–18 (MRLYFVLIFSVIFTTGNG). A glycan (N-linked (GlcNAc...) asparagine) is linked at Asn-253.

Belongs to the DNase II family.

In Caenorhabditis elegans, this protein is Cell-death-related nuclease 7 (crn-7).